The chain runs to 569 residues: Peroxisomal targeting signal receptor (569 aa).

Cys5 is covalently cross-linked (Glycyl cysteine thioester (Cys-Gly) (interchain with G-Cter in ubiquitin)). Positions 6–28 are amphipathic helix 1 (AH1); the sequence is SVGANPLAQLNKRVQQDRTLQHG. A Glycyl lysine isopeptide (Lys-Gly) (interchain with G-Cter in ubiquitin) cross-link involves residue Lys17. The interval 53–71 is amphipathic helix 2 (AH2); the sequence is KFQMEQFMAGKASSGGNMF. A WxxxF/Y motif 1 motif is present at residues 112 to 116; that stretch reads WSQEF. Positions 150 to 154 are amphipathic helix 3 (AH3); the sequence is PMNMM. Residues 181 to 185 carry the WxxxF/Y motif 2 motif; the sequence is WEQQF. An amphipathic helix 4 (AH4) region spans residues 229–245; sequence FQQIWNDIHDQTDDLDS. 5 TPR repeats span residues 281 to 315, 316 to 349, 417 to 450, 452 to 484, and 486 to 518; these read NTDAYKIGCILMENGAKLSEAALAFEAAVQQDPGH, VDAWLRLGLVQTQNEKELSGINALEQCLKADPHN, PDVQLGLGILFYANEDFDKTIDCFRAALAVRPDD, CMWNRLGASLANSNRSEEAIQAYHRAIQLKPTF, and RARYNLAVSSMNIGCYREAAEHLLTALSMHEVE.

Belongs to the peroxisomal targeting signal receptor family. Interacts (via WxxxF/Y and LVxEF motifs) with PEX14; promoting translocation through the PEX13-PEX14 docking complex. Post-translationally, monoubiquitinated at Cys-5 by PEX2 during PEX5 passage through the retrotranslocation channel: monoubiquitination acts as a signal for PEX5 extraction and is required for proper export from peroxisomes and recycling. When PEX5 recycling is compromised, polyubiquitinated at Lys-17 by PEX10 during its passage through the retrotranslocation channel, leading to its degradation.

Its subcellular location is the cytoplasm. The protein resides in the cytosol. It is found in the peroxisome matrix. Its function is as follows. Receptor that mediates peroxisomal import of proteins containing a C-terminal PTS1-type tripeptide peroxisomal targeting signal (SKL-type). Binds to cargo proteins containing a PTS1 peroxisomal targeting signal in the cytosol, and translocates them into the peroxisome matrix by passing through the PEX13-PEX14 docking complex along with cargo proteins. PEX5 receptor is then retrotranslocated into the cytosol, leading to release of bound cargo in the peroxisome matrix, and reset for a subsequent peroxisome import cycle. The polypeptide is Peroxisomal targeting signal receptor (PEX5) (Eremothecium gossypii (strain ATCC 10895 / CBS 109.51 / FGSC 9923 / NRRL Y-1056) (Yeast)).